Consider the following 111-residue polypeptide: BET1-like protein (111 aa).

Residues 1-86 (MADWTRAQSS…VARSGRDTRK (86 aa)) lie on the Cytoplasmic side of the membrane. A phosphoserine mark is found at S9 and S37. Positions 15–77 (EIVDRENKRM…TGSVKRFSTV (63 aa)) constitute a t-SNARE coiled-coil homology domain. Residues 87–107 (LLCGMAVVLIVAFFILSYLFS) form a helical; Anchor for type IV membrane protein membrane-spanning segment. Residues 108–111 (RTRT) lie on the Vesicular side of the membrane.

As to quaternary structure, component of a SNARE complex consisting of STX5, YKT6, GOSR1 and BET1L. Interacts with STX5. In terms of tissue distribution, widely expressed. Highest levels in heart, liver, skeletal muscle and kidney.

It localises to the golgi apparatus membrane. The protein resides in the golgi apparatus. It is found in the trans-Golgi network membrane. Vesicle SNARE required for targeting and fusion of retrograde transport vesicles with the Golgi complex. Required for the integrity of the Golgi complex. The polypeptide is BET1-like protein (Rattus norvegicus (Rat)).